An 884-amino-acid chain; its full sequence is Probable LRR receptor-like serine/threonine-protein kinase PAM74 (884 aa).

The signal sequence occupies residues 1–23; the sequence is MDSPCWLLLLLLGAFAIIGCVQA. Residues 24-510 are Extracellular-facing; the sequence is QDQQEFISLD…TEKNSKKKFP (487 aa). Residues Asn143, Asn182, Asn200, Asn256, Asn289, Asn400, Asn403, Asn417, Asn433, Asn444, Asn465, and Asn470 are each glycosylated (N-linked (GlcNAc...) asparagine). LRR repeat units follow at residues 412–433, 436–457, and 460–480; these read RVLS…AIQN, HLEK…FLAQ, and SLVI…QGLR. Residues 511–531 form a helical membrane-spanning segment; that stretch reads VVIVASVASVAIIVAVLVIIF. Residues 532–884 are Cytoplasmic-facing; the sequence is VLSKKKSSTV…FDTELFPRAR (353 aa). Residue Thr570 is modified to Phosphothreonine. The region spanning 579-852 is the Protein kinase domain; sequence NNFQRVVGEG…QVANELKECL (274 aa). Residues 585-593 and Lys607 each bind ATP; that span reads VGEGGFGVV. Position 652 is a phosphotyrosine (Tyr652). Asp704 acts as the Proton acceptor in catalysis. Ser738 bears the Phosphoserine mark. 2 positions are modified to phosphothreonine: Thr739 and Thr744. Tyr752 carries the post-translational modification Phosphotyrosine.

This sequence belongs to the protein kinase superfamily. Ser/Thr protein kinase family. In terms of assembly, binds to the ammonium transporter AMT1-1.

Its subcellular location is the membrane. The catalysed reaction is L-seryl-[protein] + ATP = O-phospho-L-seryl-[protein] + ADP + H(+). The enzyme catalyses L-threonyl-[protein] + ATP = O-phospho-L-threonyl-[protein] + ADP + H(+). In terms of biological role, required for accurate photosynthesis. This Arabidopsis thaliana (Mouse-ear cress) protein is Probable LRR receptor-like serine/threonine-protein kinase PAM74 (PAM74).